A 412-amino-acid chain; its full sequence is Peptide chain release factor subunit 1 (412 aa).

Belongs to the eukaryotic release factor 1 family. Heterodimer of two subunits, one of which binds GTP.

The protein localises to the cytoplasm. In terms of biological role, directs the termination of nascent peptide synthesis (translation) in response to the termination codons UAA, UAG and UGA. The chain is Peptide chain release factor subunit 1 from Methanobrevibacter smithii (strain ATCC 35061 / DSM 861 / OCM 144 / PS).